The primary structure comprises 155 residues: MSREAISNNELTEEQIAEFKEAFSLFDKDGDGTITTSELGTVMRSLGQNPTEAELHDMINEVDADGNGTIDFTEFLTMMAKKMKDTDNEEEIKEAFKVFDKDGNGFISAQELRHVMCNLGEKLTDEEVDEMIREADIDGDNQINYTEFVKMMMQK.

4 EF-hand domains span residues E14–N49, P50–D85, D87–K122, and L123–K155. D27, D29, D31, T33, E38, D63, D65, N67, T69, E74, D100, D102, N104, E111, D136, D138, D140, Q142, and E147 together coordinate Ca(2+).

The protein belongs to the calmodulin family.

It localises to the cell projection. Its subcellular location is the cilium. The protein localises to the flagellum. Calmodulin mediates the control of a large number of enzymes, ion channels and other proteins by Ca(2+). Among the enzymes to be stimulated by the calmodulin-Ca(2+) complex are a number of protein kinases and phosphatases. In Naegleria gruberi (Amoeba), this protein is Calmodulin, flagellar (CAM1).